Here is a 950-residue protein sequence, read N- to C-terminus: Translation initiation factor IF-2 (950 aa).

Disordered stretches follow at residues 69–92 and 128–352; these read KTKTVPETAKSKQEDHPRTFAGKA and KPKV…SNVP. Composition is skewed to basic and acidic residues over residues 77 to 86, 128 to 158, 165 to 186, 200 to 234, and 291 to 312; these read AKSKQEDHPR, KPKVAEPVKKSEPKAAAKAEETKVEKVEAKA, AEVKTENVADKKEPVVTEEKKK, KRAEDIKKEQAAARPEKKKFDKNRNDRNNRNDNRR, and NRRDRDRKKTDSNRDNTKDGNR. 2 stretches are compositionally biased toward polar residues: residues 322 to 336 and 343 to 352; these read NRNQVRNARNSNWNQ and YQNNQSSNVP. The tr-type G domain occupies 448-619; the sequence is ERPAVVTIMG…LLVAEVQELK (172 aa). The interval 457–464 is G1; that stretch reads GHVDHGKT. 457–464 serves as a coordination point for GTP; sequence GHVDHGKT. The interval 482-486 is G2; that stretch reads GITQH. A G3 region spans residues 503–506; sequence DTPG. GTP contacts are provided by residues 503 to 507 and 557 to 560; these read DTPGH and NKID. Positions 557 to 560 are G4; it reads NKID. Residues 595 to 597 form a G5 region; the sequence is SAK.

The protein belongs to the TRAFAC class translation factor GTPase superfamily. Classic translation factor GTPase family. IF-2 subfamily.

The protein resides in the cytoplasm. Functionally, one of the essential components for the initiation of protein synthesis. Protects formylmethionyl-tRNA from spontaneous hydrolysis and promotes its binding to the 30S ribosomal subunits. Also involved in the hydrolysis of GTP during the formation of the 70S ribosomal complex. The sequence is that of Translation initiation factor IF-2 from Lactococcus lactis subsp. cremoris (strain SK11).